A 364-amino-acid chain; its full sequence is Pectinesterase (364 aa).

Positions 1-22 (MSCIAVEAVLLGILLYIPIVLS) are cleaved as a signal peptide. The N-linked (GlcNAc...) asparagine glycan is linked to asparagine 103. Residue aspartate 220 is part of the active site.

The protein resides in the secreted. The catalysed reaction is [(1-&gt;4)-alpha-D-galacturonosyl methyl ester](n) + n H2O = [(1-&gt;4)-alpha-D-galacturonosyl](n) + n methanol + n H(+). The protein operates within glycan metabolism; pectin degradation; 2-dehydro-3-deoxy-D-gluconate from pectin: step 1/5. In terms of biological role, catalyzes the demethylesterification of homogalacturonan components of pectin. The chain is Pectinesterase from Parthenium hysterophorus (Santa Maria feverfew).